The sequence spans 96 residues: Co-chaperonin GroES (96 aa).

The protein belongs to the GroES chaperonin family. Heptamer of 7 subunits arranged in a ring. Interacts with the chaperonin GroEL.

Its subcellular location is the cytoplasm. In terms of biological role, together with the chaperonin GroEL, plays an essential role in assisting protein folding. The GroEL-GroES system forms a nano-cage that allows encapsulation of the non-native substrate proteins and provides a physical environment optimized to promote and accelerate protein folding. GroES binds to the apical surface of the GroEL ring, thereby capping the opening of the GroEL channel. The chain is Co-chaperonin GroES from Wolbachia sp. subsp. Drosophila simulans (strain wRi).